A 195-amino-acid polypeptide reads, in one-letter code: Interferon tau-5 (195 aa).

The N-terminal stretch at 1–23 is a signal peptide; it reads MAFVLSLLMALVLVSYGPGGSLG. 2 cysteine pairs are disulfide-bonded: Cys-24/Cys-122 and Cys-52/Cys-162.

It belongs to the alpha/beta interferon family. IFN-alphaII subfamily. As to expression, constitutively and exclusively expressed in the mononuclear cells of the extraembryonic trophectoderm.

The protein resides in the secreted. Functionally, paracrine hormone primarily responsible for maternal recognition of pregnancy. Interacts with endometrial receptors, probably type I interferon receptors, and blocks estrogen receptor expression, preventing the estrogen-induced increase in oxytocin receptor expression in the endometrium. This results in the suppression of the pulsatile endometrial release of the luteolytic hormone prostaglandin F2-alpha, hindering the regression of the corpus luteum (luteolysis) and therefore a return to ovarian cyclicity. This, and a possible direct effect of IFN-tau on prostaglandin synthesis, leads in turn to continued ovarian progesterone secretion, which stimulates the secretion by the endometrium of the nutrients required for the growth of the conceptus. In summary, displays particularly high antiviral and antiproliferative potency concurrently with particular weak cytotoxicity, high antiluteolytic activity and immunomodulatory properties. In contrast with other IFNs, IFN-tau is not virally inducible. This Ovis aries (Sheep) protein is Interferon tau-5 (IFNT5).